The following is an 832-amino-acid chain: AP-1 complex subunit gamma-1 (832 aa).

Residues 733-832 (LNVYASLLSA…QFDHKFDETL (100 aa)) enclose the GAE domain.

Adapter protein complex 1 (AP-1) is a heterotetramer composed of two large adaptins (gamma-type subunit APL4 and beta-type subunit APL2), a medium adaptin (mu-type subunit APM1) and a small adaptin (sigma-type subunit APS1). AP-1 interacts with clathrin. Also a component of the AP-1R complex composed of at least APM2, APL4 and APS1.

The protein localises to the cytoplasm. The protein resides in the golgi apparatus membrane. It localises to the cytoplasmic vesicle. Its subcellular location is the clathrin-coated vesicle membrane. Functionally, adaptins are components of the adapter complexes which link clathrin to receptors in coated vesicles. Clathrin-associated protein complexes are believed to interact with the cytoplasmic tails of membrane proteins, leading to their selection and concentration. The AP-1 complex interacts directly with clathrin. Component of the AP-1-related (AP-1R) complex, an adapter protein complex that mediates sorting of cargo SNARE SNC1. In contrast to the APM1-containing AP-1 complex, AP-1R is incapable of sorting CHS3. This chain is AP-1 complex subunit gamma-1 (APL4), found in Saccharomyces cerevisiae (strain ATCC 204508 / S288c) (Baker's yeast).